The chain runs to 151 residues: SsrA-binding protein (151 aa).

Residues 131–151 (KRESIKEKDWKRDQSRLIRQK) are disordered.

Belongs to the SmpB family.

Its subcellular location is the cytoplasm. Its function is as follows. Required for rescue of stalled ribosomes mediated by trans-translation. Binds to transfer-messenger RNA (tmRNA), required for stable association of tmRNA with ribosomes. tmRNA and SmpB together mimic tRNA shape, replacing the anticodon stem-loop with SmpB. tmRNA is encoded by the ssrA gene; the 2 termini fold to resemble tRNA(Ala) and it encodes a 'tag peptide', a short internal open reading frame. During trans-translation Ala-aminoacylated tmRNA acts like a tRNA, entering the A-site of stalled ribosomes, displacing the stalled mRNA. The ribosome then switches to translate the ORF on the tmRNA; the nascent peptide is terminated with the 'tag peptide' encoded by the tmRNA and targeted for degradation. The ribosome is freed to recommence translation, which seems to be the essential function of trans-translation. The protein is SsrA-binding protein of Rickettsia bellii (strain OSU 85-389).